The following is a 60-amino-acid chain: Metallothionein A (60 aa).

Residues Met1 to Cys28 form a beta region. Cys4, Cys6, Cys12, Cys14, Cys18, Cys20, Cys23, Cys25, Cys28, Cys32, Cys33, Cys35, Cys36, Cys40, Cys43, Cys47, Cys49, Cys54, Cys58, and Cys59 together coordinate a divalent metal cation. The alpha stretch occupies residues Lys29–Gln60.

This sequence belongs to the metallothionein superfamily. Type 1 family.

In terms of biological role, metallothioneins have a high content of cysteine residues that bind various heavy metals. The protein is Metallothionein A (mta) of Cyprinodon sp. (Pupfish).